Here is a 549-residue protein sequence, read N- to C-terminus: MKNFLLLAIMLFPHLTWANVISETGERQPVNIQAIIMFVLFVGFTLYITYWASKKTRSRTDYYTAGGRITGFQNGMAIAGDFMSAASFLGISALVYTSGYDGLIYSIGFLIGWPIILFLIAERLRNLGRYTFADVASYRLQQRPIRILSAIGSLFVVALYLIAQMVGAGKLIELLFGLNYHVAVVLVGILMVLYVLFGGMLATTWVQIIKAILLLAGATFMALMVMKIVNFNFNTLFKEAIAVHSRGEAIMSPGGLVSDPISALSLGLALMFGTAGLPHIIMRFFTVSDAKEARKSVFYATGFIGYFYILTFIIGFGAILLVSPNPSFKDTTGALIGGTNMAAVHLASAVGGNLFLGFISAVAFATILAVVAGLTLAGASAVSHDLYANAIKSGKANERDELRVSKITVVILGFIAIGLGILFENQNIAFMVGLAFSIAASCNFPIILLSMYWHKLTTRGALVGGWLGLITAVVLMILGPTIWVSILGHEKPIYPYEYPALFSMIIAFIGSWLFSITDNSQQGMQEREQFRIQFIRSQTGLGIAQGKTH.

Helical transmembrane passes span 32 to 54, 75 to 97, 102 to 124, 145 to 167, 182 to 204, 211 to 233, 263 to 285, 298 to 320, 361 to 383, 404 to 423, 428 to 450, 462 to 484, and 494 to 516; these read IQAIIMFVLFVGFTLYITYWASK, GMAIAGDFMSAASFLGISALVYT, GLIYSIGFLIGWPIILFLIAERL, IRILSAIGSLFVVALYLIAQMVG, VAVVLVGILMVLYVLFGGMLATT, AILLLAGATFMALMVMKIVNFNF, ALSLGLALMFGTAGLPHIIMRFF, FYATGFIGYFYILTFIIGFGAIL, AVAFATILAVVAGLTLAGASAVS, VSKITVVILGFIAIGLGILF, IAFMVGLAFSIAASCNFPIILLS, LVGGWLGLITAVVLMILGPTIWV, and YPYEYPALFSMIIAFIGSWLFSI.

Belongs to the sodium:solute symporter (SSF) (TC 2.A.21) family.

The protein resides in the cell inner membrane. Transports acetate. This is Cation/acetate symporter ActP from Photorhabdus laumondii subsp. laumondii (strain DSM 15139 / CIP 105565 / TT01) (Photorhabdus luminescens subsp. laumondii).